Consider the following 204-residue polypeptide: MTSQPLRVGIGGPVGSGKTALTLALCRELRERYNLAVVTNDIYTQEDAEFLVRNEALAPERIIGVETGGCPHTAIREDASINLEAVDQLNRRFPGLELILVESGGDNLSATFSPELSDLTLYVIDVSAGDKIPRKGGPGICKSDLLVINKIDLAPLVGASLDVMDRDARRMRGDKPFVFSNQKTGQGLDEIIAFIERQGLLTAA.

12-19 is a binding site for GTP; sequence GPVGSGKT.

This sequence belongs to the SIMIBI class G3E GTPase family. UreG subfamily. Homodimer. UreD, UreF and UreG form a complex that acts as a GTP-hydrolysis-dependent molecular chaperone, activating the urease apoprotein by helping to assemble the nickel containing metallocenter of UreC. The UreE protein probably delivers the nickel.

The protein localises to the cytoplasm. In terms of biological role, facilitates the functional incorporation of the urease nickel metallocenter. This process requires GTP hydrolysis, probably effectuated by UreG. In Pseudomonas aeruginosa (strain LESB58), this protein is Urease accessory protein UreG.